Here is a 139-residue protein sequence, read N- to C-terminus: Putative pre-16S rRNA nuclease (139 aa).

The protein belongs to the YqgF nuclease family.

The protein resides in the cytoplasm. Functionally, could be a nuclease involved in processing of the 5'-end of pre-16S rRNA. The chain is Putative pre-16S rRNA nuclease from Photorhabdus laumondii subsp. laumondii (strain DSM 15139 / CIP 105565 / TT01) (Photorhabdus luminescens subsp. laumondii).